Here is a 227-residue protein sequence, read N- to C-terminus: Ion-translocating oxidoreductase complex subunit E (227 aa).

The next 5 membrane-spanning stretches (helical) occupy residues 57 to 77 (LGLG…ISLF), 89 to 109 (IYVM…NAFA), 111 to 131 (PVYQ…IVIG), 146 to 166 (AFDG…LGAI), and 200 to 220 (GLLL…ILAV).

It belongs to the NqrDE/RnfAE family. In terms of assembly, the complex is composed of six subunits: RnfA, RnfB, RnfC, RnfD, RnfE and RnfG.

It localises to the cell inner membrane. Functionally, part of a membrane-bound complex that couples electron transfer with translocation of ions across the membrane. The polypeptide is Ion-translocating oxidoreductase complex subunit E (Haemophilus ducreyi (strain 35000HP / ATCC 700724)).